The chain runs to 532 residues: FAD-dependent monooxygenase hkm7 (532 aa).

FAD contacts are provided by residues 191–193 and D261; that span reads RIY.

It belongs to the PheA/TfdB FAD monooxygenase family.

It participates in secondary metabolite biosynthesis. FAD-dependent monooxygenase; part of the gene cluster that mediates the biosynthesis of hancockiamides, an unusual new family of N-cinnamoylated piperazines. The NRPS hkm10 and the NmrA-like reductase hkm9 are proposed to convert two molecules of L-Phe to the intermediary piperazine called xenocockiamide A. Xenocockiamide A is then converted to hancockiamide D via a series of hydroxylations and O-methylations. The tyrosinase hkm6 may catalyze an aromatic hydroxylation, then the 2-oxoglutarate-dependent Fe(II) dioxygenase hkm4 and the FAD-dependent phenol hydroxylase hkm7 may catalyze consecutive hydroxylations to install 2 more hydroxy groups, and the methyltransferase hkm8 probably catalyzes two methylations using 2 molecules of S-adenosyl-L-methionine (SAM). The NRPS hkm11 activates and transfers trans-cinnamate supplied by the PAL hkm12 to hancockiamide D and produces hancockiamide A. NRPS Hkm11 has the flexibility to tolerate the bulky hancockiamide G as a substrate and the absence of the acetyl-transferase hkm3 opens up the opportunity for hkm11 to introduce a second N-cinnamoyl moiety. The cytochrome P450 monooxygenase hkm5 catalyzes the methylenedioxy bridge formation, converting hancockiamide A into hancockiamide G. Hkm5 can also convert hancockiamide B into hancockiamide C, and hancockiamide D into hancockiamide H. The N-acetyltransferase hkm3 finally transfers an acetyl group to 1-N of piperazine, converting hancockiamide A into hancockiamide B and hancockiamide G into hancockiamide C. The chain is FAD-dependent monooxygenase hkm7 from Aspergillus hancockii.